The primary structure comprises 195 residues: Insertion element IS136 uncharacterized protein Atu4601 (195 aa).

An Integrase catalytic domain is found at 25–194 (MVMRSNLRWC…SPRQFIRAKS (170 aa)).

In Agrobacterium fabrum (strain C58 / ATCC 33970) (Agrobacterium tumefaciens (strain C58)), this protein is Insertion element IS136 uncharacterized protein Atu4601.